We begin with the raw amino-acid sequence, 384 residues long: Centrosomal protein of 44 kDa (384 aa).

Residues Arg11–Glu188 are binds with microtubules and centrioles. The segment at Glu191–Ser222 is disordered. Positions Gly201–Glu210 are enriched in basic and acidic residues. 2 coiled-coil regions span residues Asn221–Ile260 and Thr353–Leu378.

As to quaternary structure, binds to centriolar microtubules.

The protein localises to the cytoplasm. Its subcellular location is the cytoskeleton. It is found in the microtubule organizing center. It localises to the centrosome. The protein resides in the centriole. The protein localises to the spindle pole. Its subcellular location is the midbody. Centriole-enriched microtubule-binding protein involved in centriole biogenesis. In collaboration with CEP295 and POC1B, is required for the centriole-to-centrosome conversion by ensuring the formation of bona fide centriole wall. Functions as a linker component that maintains centrosome cohesion. Associates with CROCC and regulates its stability and localization to the centrosome. This Xenopus laevis (African clawed frog) protein is Centrosomal protein of 44 kDa (cep44).